The primary structure comprises 262 residues: Small ribosomal subunit protein uS2 (262 aa).

Belongs to the universal ribosomal protein uS2 family.

The sequence is that of Small ribosomal subunit protein uS2 from Roseiflexus sp. (strain RS-1).